The chain runs to 334 residues: Protein-methionine-sulfoxide reductase catalytic subunit MsrP (334 aa).

Residues 1–44 (MKAVNPLTENDVTPESLFNARRRTVLKMLGMSAAALSLPGAARA) constitute a signal peptide (tat-type signal). Mo-molybdopterin-binding positions include asparagine 88, 91–92 (YE), cysteine 146, threonine 181, asparagine 233, arginine 238, and 249–251 (GIK).

The protein belongs to the MsrP family. In terms of assembly, heterodimer of a catalytic subunit (MsrP) and a heme-binding subunit (MsrQ). It depends on Mo-molybdopterin as a cofactor. Post-translationally, predicted to be exported by the Tat system. The position of the signal peptide cleavage has not been experimentally proven.

It localises to the periplasm. The catalysed reaction is L-methionyl-[protein] + a quinone + H2O = L-methionyl-(S)-S-oxide-[protein] + a quinol. The enzyme catalyses L-methionyl-[protein] + a quinone + H2O = L-methionyl-(R)-S-oxide-[protein] + a quinol. Functionally, part of the MsrPQ system that repairs oxidized periplasmic proteins containing methionine sulfoxide residues (Met-O), using respiratory chain electrons. Thus protects these proteins from oxidative-stress damage caused by reactive species of oxygen and chlorine generated by the host defense mechanisms. MsrPQ is essential for the maintenance of envelope integrity under bleach stress, rescuing a wide series of structurally unrelated periplasmic proteins from methionine oxidation. The catalytic subunit MsrP is non-stereospecific, being able to reduce both (R-) and (S-) diastereoisomers of methionine sulfoxide. This Erwinia tasmaniensis (strain DSM 17950 / CFBP 7177 / CIP 109463 / NCPPB 4357 / Et1/99) protein is Protein-methionine-sulfoxide reductase catalytic subunit MsrP.